The chain runs to 519 residues: Seed lectin (519 aa).

2 cysteine pairs are disulfide-bonded: Cys249–Cys258 and Cys274–Cys293. 2 Ricin B-type lectin domains span residues 261 to 387 (ETRT…WRVG) and 390 to 518 (VQPI…WVLF). A 1-alpha repeat occupies 271–311 (DALCVDVAGALTSDGSRLILYPCGQQVNQKWTFHSDGTVRS). Residues 276 to 279 (DVAG) and 296 to 298 (QVN) each bind a carbohydrate. The 1-beta repeat unit spans residues 312–352 (LGKCLATNNSKFGNLVVIYDCSKLAAEDISWDVSVGGTIMN). Cys315 and Cys332 form a disulfide bridge. A 1-gamma repeat occupies 356–388 (EDLALTSNKATRSTNLTMEVNTYSASQGWRVGN). The N-linked (GlcNAc...) asparagine glycan is linked to Asn370. The 2-alpha repeat unit spans residues 401-438 (DDMCLEATDGNTNMWLEECVPNQREQSWALYSDGTIRV). 2 disulfides stabilise this stretch: Cys404–Cys419 and Cys445–Cys464. A 2-beta repeat occupies 442 to 482 (RELCVTASSSTYDNWKVITILNCDGSNNQRWVFLADGSIST). Residues Asp454, 491–494 (DVAR), 505–508 (HRPH), and Asn512 each bind a carbohydrate. The stretch at 486–513 (QRLAMDVARSDVDLKKIILHRPHGDLNQ) is one 2-gamma repeat.

It in the N-terminal section; belongs to the ribosome-inactivating protein family. Type 2 RIP subfamily. In terms of assembly, heterotrimer consisting of Aalpha, Abeta and B chains with Abeta and B being disulfide-linked.

Seed lectin similar to type 2 ribosome-inactivating proteins. The Aalpha and Abeta chains constitute the rRNA glycosidase domain and the B chain the carbohydrate-binding lectin domain. Is predicted to have no glycosidase activity and, hence, to be non-toxic, due to small changes in both the nucleotide binding and carbohydrate binding capabilities. Binds galactose and derivatives with a preference for the beta-anomeric forms. Binds prophyrins. Has hemagglutinating activity towards rabbit and human erythrocytes. This chain is Seed lectin, found in Trichosanthes anguina (Snake gourd).